The following is a 310-amino-acid chain: Transaldolase (310 aa).

Lys124 functions as the Schiff-base intermediate with substrate in the catalytic mechanism.

Belongs to the transaldolase family. Type 1 subfamily. As to quaternary structure, homodimer.

It is found in the cytoplasm. It carries out the reaction D-sedoheptulose 7-phosphate + D-glyceraldehyde 3-phosphate = D-erythrose 4-phosphate + beta-D-fructose 6-phosphate. It participates in carbohydrate degradation; pentose phosphate pathway; D-glyceraldehyde 3-phosphate and beta-D-fructose 6-phosphate from D-ribose 5-phosphate and D-xylulose 5-phosphate (non-oxidative stage): step 2/3. Transaldolase is important for the balance of metabolites in the pentose-phosphate pathway. This chain is Transaldolase, found in Teredinibacter turnerae (strain ATCC 39867 / T7901).